Reading from the N-terminus, the 481-residue chain is UDP-N-acetylmuramate--L-alanine ligase (481 aa).

ATP is bound at residue 122 to 128 (GVHGKTT).

The protein belongs to the MurCDEF family.

It localises to the cytoplasm. It catalyses the reaction UDP-N-acetyl-alpha-D-muramate + L-alanine + ATP = UDP-N-acetyl-alpha-D-muramoyl-L-alanine + ADP + phosphate + H(+). It functions in the pathway cell wall biogenesis; peptidoglycan biosynthesis. In terms of biological role, cell wall formation. This Treponema pallidum (strain Nichols) protein is UDP-N-acetylmuramate--L-alanine ligase.